Here is a 483-residue protein sequence, read N- to C-terminus: Glutamyl-tRNA(Gln) amidotransferase subunit A (483 aa).

Residues Lys77 and Ser152 each act as charge relay system in the active site. The Acyl-ester intermediate role is filled by Ser176.

Belongs to the amidase family. GatA subfamily. As to quaternary structure, heterotrimer of A, B and C subunits.

The enzyme catalyses L-glutamyl-tRNA(Gln) + L-glutamine + ATP + H2O = L-glutaminyl-tRNA(Gln) + L-glutamate + ADP + phosphate + H(+). Allows the formation of correctly charged Gln-tRNA(Gln) through the transamidation of misacylated Glu-tRNA(Gln) in organisms which lack glutaminyl-tRNA synthetase. The reaction takes place in the presence of glutamine and ATP through an activated gamma-phospho-Glu-tRNA(Gln). The sequence is that of Glutamyl-tRNA(Gln) amidotransferase subunit A from Listeria innocua serovar 6a (strain ATCC BAA-680 / CLIP 11262).